Consider the following 541-residue polypeptide: Exopolysaccharide phosphotransferase SCO6021 (541 aa).

This sequence belongs to the stealth family.

The chain is Exopolysaccharide phosphotransferase SCO6021 from Streptomyces coelicolor (strain ATCC BAA-471 / A3(2) / M145).